Consider the following 314-residue polypeptide: Fibrinogen-like protein 1 (314 aa).

Positions 1–22 are cleaved as a signal peptide; that stretch reads MGEIRSFLLVTIALMMGREIWA. Positions 25–59 form a coiled coil; that stretch reads NSKCLLEQERLRAQVQQLETRVKQQQARIAQLMHE. One can recognise a Fibrinogen C-terminal domain in the interval 76–308; that stretch reads LGGKRQYADC…SVVMKIRPND (233 aa). 2 disulfide bridges follow: cysteine 85-cysteine 114 and cysteine 250-cysteine 263.

Homodimer. Interacts (via the Fibrinogen C-terminal domain) with LAG3 (via Ig-like domains 1 and 2).

It is found in the secreted. Its function is as follows. Immune suppressive molecule that inhibits antigen-specific T-cell activation by acting as a major ligand of LAG3. Responsible for LAG3 T-cell inhibitory function. Binds LAG3 independently from MHC class II (MHC-II). Secreted by, and promotes growth of, hepatocytes. The chain is Fibrinogen-like protein 1 from Mesocricetus auratus (Golden hamster).